The chain runs to 297 residues: Ubiquinol oxidase 2, mitochondrial (297 aa).

Residues 17-43 are disordered; sequence VALNDKQHDKKVENGGAAASGGGDGGD. A helical membrane pass occupies residues 122–142; the sequence is AMMLETVAAVPGMVGGMLLHC. 3 residues coordinate Fe cation: E126, E165, and H168. Residues 184-204 form a helical membrane-spanning segment; it reads ALVFAVQGVFINAYFVTYLLS. Residues E216, E267, and H270 each contribute to the Fe cation site.

Belongs to the alternative oxidase family. Homodimer; disulfide-linked. Requires Fe cation as cofactor.

It is found in the mitochondrion inner membrane. It catalyses the reaction 2 a ubiquinol + O2 = 2 a ubiquinone + 2 H2O. Its function is as follows. Catalyzes the cyanide-resistant oxidation of ubiquinol and the reduction of molecular oxygen to water, but does not translocate protons and consequently is not linked to oxidative phosphorylation. May increase respiration when the cytochrome respiratory pathway is restricted, or in response to low temperatures. This Nicotiana tabacum (Common tobacco) protein is Ubiquinol oxidase 2, mitochondrial (AOX2).